The sequence spans 412 residues: Argininosuccinate synthase (412 aa).

10–18 contributes to the ATP binding site; sequence AYSGGLDTS. Tyr-89 serves as a coordination point for L-citrulline. Gly-119 contributes to the ATP binding site. Residues Thr-121, Asn-125, and Asp-126 each contribute to the L-aspartate site. Position 125 (Asn-125) interacts with L-citrulline. Residues Arg-129, Ser-177, Glu-261, and Tyr-273 each coordinate L-citrulline.

It belongs to the argininosuccinate synthase family. Type 1 subfamily. In terms of assembly, homotetramer.

The protein localises to the cytoplasm. It carries out the reaction L-citrulline + L-aspartate + ATP = 2-(N(omega)-L-arginino)succinate + AMP + diphosphate + H(+). It functions in the pathway amino-acid biosynthesis; L-arginine biosynthesis; L-arginine from L-ornithine and carbamoyl phosphate: step 2/3. The sequence is that of Argininosuccinate synthase from Bifidobacterium longum subsp. infantis (strain ATCC 15697 / DSM 20088 / JCM 1222 / NCTC 11817 / S12).